Here is a 392-residue protein sequence, read N- to C-terminus: MKTIICLFTIAIAAMAAVTNLSNVLKNGNDNFTARMFTEVVKNNPGKSIVLSAFSVLPPLAQLALASDGETHEELLKAIGFPDDDAIRTEFASKSRDLRSIKGVELKMANKVYVHDGGKLDENFAVVSRDVFNSDVQNIDFSKNTVAAKSINDWVEENTNNRIKDLVNPDSLSSATAAVLVNAIYFKGAWSSKFDERLTSDRDFYVSKDKTIKVPMMYKRGDYKYGESAVLNAQLIEIPYKGDQSSLIVVLPKDKDGITQLQEALKDPKTLETAQQSMYSTEVDLYLPKFKIETETNLKDVLSNMNVNKIFNNDAQITRLLKGESLSVSEAIQKAFIEINEEGAEAAAANAFTMTRSSKVYVRPPIVFNANKPFYYALQVDGVIMFNGIFIN.

The first 16 residues, 1-16, serve as a signal peptide directing secretion; that stretch reads MKTIICLFTIAIAAMA.

This sequence belongs to the serpin family. In terms of tissue distribution, hemolymph.

Its subcellular location is the secreted. In terms of biological role, may play a role in the prophenoloxidase activating system in the silkworm hemolymph. The sequence is that of Antitrypsin from Bombyx mori (Silk moth).